The chain runs to 403 residues: MKLEVFVPRAAHGDKQGSDLEGAGGSDAPSPLSAAGDDSLGSDGDCAANSPAAGGGARDTQGDGEQSAGGGPGAEEAIPAAAAAAVVAEGAEAGAAGPGAGGAGSGEGARSKPYTRRPKPPYSYIALIAMAIRDSAGGRLTLAEINEYLMGKFPFFRGSYTGWRNSVRHNLSLNDCFVKVLRDPSRPWGKDNYWMLNPNSEYTFADGVFRRRRKRLSHRAPVPAPGLRPEEAPGLPAAPPPAPAAPASPRMRSPARQEERASPAGKFSSSFAIDSILRKPFRSRRLRDTAPGTTLQWGAAPCPPLPAFPALLPAAPCRALLPLCAYGAGEPARLGAREAEVPPTAPPLLLAPLPAAAPAKPLRGPAAGGAHLYCPLRLPAALQAASVRRPGPHLPYPVETLLA.

2 disordered regions span residues Met-1–Glu-75 and Gly-94–Arg-116. The segment covering Leu-32–Ala-48 has biased composition (low complexity). Over residues Ala-96–Glu-107 the composition is skewed to gly residues. A DNA-binding region (fork-head) is located at residues Lys-119–Lys-214. Residues Leu-216–Lys-266 form a disordered region. Residues Pro-236–Pro-246 show a composition bias toward pro residues.

In terms of tissue distribution, expressed predominantly in the stomach, trachea, bladder and salivary gland.

The protein localises to the nucleus. Its function is as follows. Plays a role in hair follicle differentiation. This is Forkhead box protein Q1 (FOXQ1) from Homo sapiens (Human).